Here is a 553-residue protein sequence, read N- to C-terminus: MAASKKAVLGPLVGAVDQGTSSTRFLVFNSRTAELLSHHQVEIKQEFPREGWVEQDPKEILHSVYECIEKTCEKLGQLNIGISNIKAIGVSNQRETTVVWDKITGEPLYNAVVWLDLRTQSTVESLSKRIPGNNNFVKSKTGLPLSTYFSAVKLRWLLDNVRKVQKAVEEKRALFGTIDSWLIWSLTGGVNGGVHCTDVTNASRTMLFNIHSLEWDKQLCEFFGIPMEILPHVRSSSEIYGLMKAGALEGVPISGCLGDQSAALVGQMCFQIGQAKNTYGTGCFLLCNTGHKCVFSDHGLLTTVAYKLGRDKPVYYALEGSVAIAGAVIRWLRDNLGIIKTSEEIEKLAKEVGTSYGCYFVPAFSGLYAPYWEPSARGIICGLTQFTNKCHIAFAALEAVCFQTREILDAMNRDCGIPLSHLQVDGGMTSNKILMQLQADILYIPVVKPLMPETTALGAAMAAGAAEGVDVWSLEPEDLSAVTMERFEPQINAEESEIRYSTWKKAVMKSMGWVTTQSPEGGDPSVFCSLPLGFFIVSSMAMLIGARYISGIP.

Threonine 20 is a binding site for substrate. Arginine 24 contacts ATP. Substrate is bound by residues arginine 94, tyrosine 148, and aspartate 259. ATP-binding positions include threonine 281, glycine 326, and 427–431 (GMTSN).

The protein belongs to the FGGY kinase family.

Its subcellular location is the mitochondrion outer membrane. It is found in the cytoplasm. The enzyme catalyses glycerol + ATP = sn-glycerol 3-phosphate + ADP + H(+). It functions in the pathway polyol metabolism; glycerol degradation via glycerol kinase pathway; sn-glycerol 3-phosphate from glycerol: step 1/1. In terms of biological role, may be involved in the regulation of glycerol uptake and metabolism. The protein is Glycerol kinase 3 of Homo sapiens (Human).